Here is a 320-residue protein sequence, read N- to C-terminus: HPr kinase/phosphorylase (320 aa).

Active-site residues include histidine 141 and lysine 162. Residue 156–163 participates in ATP binding; that stretch reads GHSGLGKS. Serine 163 contributes to the Mg(2+) binding site. The Proton acceptor; for phosphorylation activity. Proton donor; for dephosphorylation activity role is filled by aspartate 180. The important for the catalytic mechanism of both phosphorylation and dephosphorylation stretch occupies residues 204–213; sequence LEVRGLGILN. Glutamate 205 serves as a coordination point for Mg(2+). Residue arginine 248 is part of the active site. Positions 269-274 are important for the catalytic mechanism of dephosphorylation; the sequence is PVAVGR.

The protein belongs to the HPrK/P family. As to quaternary structure, homohexamer. It depends on Mg(2+) as a cofactor.

The catalysed reaction is [HPr protein]-L-serine + ATP = [HPr protein]-O-phospho-L-serine + ADP + H(+). It carries out the reaction [HPr protein]-O-phospho-L-serine + phosphate + H(+) = [HPr protein]-L-serine + diphosphate. Its function is as follows. Catalyzes the ATP- as well as the pyrophosphate-dependent phosphorylation of a specific serine residue in HPr, a phosphocarrier protein of the phosphoenolpyruvate-dependent sugar phosphotransferase system (PTS). HprK/P also catalyzes the pyrophosphate-producing, inorganic phosphate-dependent dephosphorylation (phosphorolysis) of seryl-phosphorylated HPr (P-Ser-HPr). The chain is HPr kinase/phosphorylase from Neisseria meningitidis serogroup B (strain ATCC BAA-335 / MC58).